The chain runs to 1110 residues: ATP-dependent DNA helicase MPH1 (1110 aa).

A compositionally biased stretch (polar residues) spans 24 to 34 (LNEVSDSQTGR). Disordered regions lie at residues 24-165 (LNEV…TNGK), 178-212 (FEEEQSARGDAEMLDDSIEEPGDTQVHATPGPVTN), and 236-305 (TETA…PTHH). Basic and acidic residues-rich tracts occupy residues 42-57 (NSHEINTDSTGRREIE) and 178-188 (FEEEQSARGDA). The span at 189–199 (EMLDDSIEEPG) shows a compositional bias: acidic residues. 2 stretches are compositionally biased toward polar residues: residues 246-273 (ISSQPRPSQNTTRRPTASQSTSFRQTTL) and 287-300 (QPATQTWPSSSRNE). A Helicase ATP-binding domain is found at 331-499 (IAHRALFHNL…EVIDGLSISR (169 aa)). 344-351 (LPTGLGKT) is a binding site for ATP. A DEAH box motif is present at residues 447 to 450 (DEAH). The Helicase C-terminal domain occupies 675–846 (ILNHFLDAGG…RFTFHTDKSS (172 aa)). Disordered regions lie at residues 867-937 (ENSQ…PDLG), 1013-1055 (VGDP…RCGT), and 1069-1110 (NLAW…DVFE). The span at 879–890 (RSRAPKRPPKKF) shows a compositional bias: basic residues. Basic and acidic residues-rich tracts occupy residues 891 to 900 (HMPDGVEKGF), 1041 to 1055 (QSREQPPRVEKRCGT), and 1077 to 1093 (EAPRPESDGTDNRDQKP).

This sequence belongs to the DEAD box helicase family. DEAH subfamily. FANCM sub-subfamily. As to quaternary structure, interacts with the MHF histone-fold complex to form the FANCM-MHF complex.

Its subcellular location is the nucleus. It catalyses the reaction ATP + H2O = ADP + phosphate + H(+). Its function is as follows. ATP-dependent DNA helicase involved in DNA damage repair by homologous recombination and in genome maintenance. Capable of unwinding D-loops. Plays a role in limiting crossover recombinants during mitotic DNA double-strand break (DSB) repair. Component of a FANCM-MHF complex which promotes gene conversion at blocked replication forks, probably by reversal of the stalled fork. The polypeptide is ATP-dependent DNA helicase MPH1 (Coccidioides immitis (strain RS) (Valley fever fungus)).